Consider the following 214-residue polypeptide: Cytochrome b (214 aa).

4 consecutive transmembrane segments (helical) span residues 31 to 51, 75 to 96, 111 to 131, and 176 to 196; these read FGSMLLACLMIQIITGFFLAI, WIMQNTHAISASLFFICIYIHI, WLSGTTLLIILMATAFFGYVL, and FFALHFILPFIIISMSSIHIL. Heme b is bound by residues His-81 and His-95. Residues His-180 and His-194 each coordinate heme b. His-199 provides a ligand contact to a ubiquinone.

Belongs to the cytochrome b family. The cytochrome bc1 complex contains 3 respiratory subunits (MT-CYB, CYC1 and UQCRFS1), 2 core proteins (UQCRC1 and UQCRC2) and probably 6 low-molecular weight proteins. It depends on heme b as a cofactor.

The protein resides in the mitochondrion inner membrane. Its function is as follows. Component of the ubiquinol-cytochrome c reductase complex (complex III or cytochrome b-c1 complex) that is part of the mitochondrial respiratory chain. The b-c1 complex mediates electron transfer from ubiquinol to cytochrome c. Contributes to the generation of a proton gradient across the mitochondrial membrane that is then used for ATP synthesis. The polypeptide is Cytochrome b (MT-CYB) (Bothrops atrox (Barba amarilla)).